A 175-amino-acid polypeptide reads, in one-letter code: Co-chaperone protein HscB homolog (175 aa).

The J domain occupies 7–79; the sequence is SHFDLFHLPA…LQRASYLLSL (73 aa).

The protein belongs to the HscB family. As to quaternary structure, interacts with HscA and stimulates its ATPase activity.

Its function is as follows. Co-chaperone involved in the maturation of iron-sulfur cluster-containing proteins. Seems to help targeting proteins to be folded toward HscA. In Burkholderia vietnamiensis (strain G4 / LMG 22486) (Burkholderia cepacia (strain R1808)), this protein is Co-chaperone protein HscB homolog.